The primary structure comprises 309 residues: Protein FdhE homolog (309 aa).

It belongs to the FdhE family.

The protein resides in the cytoplasm. In terms of biological role, necessary for formate dehydrogenase activity. The protein is Protein FdhE homolog of Pseudomonas aeruginosa (strain ATCC 15692 / DSM 22644 / CIP 104116 / JCM 14847 / LMG 12228 / 1C / PRS 101 / PAO1).